The chain runs to 156 residues: Probable cyclic pyranopterin monophosphate synthase (156 aa).

Substrate-binding positions include 73–75 and 109–110; these read MCH and ME. Asp-124 is a catalytic residue.

This sequence belongs to the MoaC family. In terms of assembly, homohexamer; trimer of dimers.

The catalysed reaction is (8S)-3',8-cyclo-7,8-dihydroguanosine 5'-triphosphate = cyclic pyranopterin phosphate + diphosphate. Its pathway is cofactor biosynthesis; molybdopterin biosynthesis. In terms of biological role, catalyzes the conversion of (8S)-3',8-cyclo-7,8-dihydroguanosine 5'-triphosphate to cyclic pyranopterin monophosphate (cPMP). In Archaeoglobus fulgidus (strain ATCC 49558 / DSM 4304 / JCM 9628 / NBRC 100126 / VC-16), this protein is Probable cyclic pyranopterin monophosphate synthase.